A 294-amino-acid chain; its full sequence is Transcription factor nsy-7 (294 aa).

Disordered stretches follow at residues 43–119 (CNLR…TPDL) and 167–191 (LRLP…DSPL). Composition is skewed to polar residues over residues 52 to 63 (DQPTTSSNSVKE) and 81 to 115 (RRQS…SNDP). Residues 192–232 (QTRMKGWQREYIKEVIKDSHYPTEEELRDIEQKCDLSRKQI) constitute a DNA-binding region (homeobox; atypical). The segment at 238 to 274 (KRLTNPNRKPRVNHHDEKRKEQEERDSLADPDDDMIN) is disordered. Residues 250–265 (NHHDEKRKEQEERDSL) show a composition bias toward basic and acidic residues.

In terms of tissue distribution, expressed widely, including gut, the amphid sheath glial cells, and head and tail neurons including AWC, ASE, and ASH. Expressed in AWC (ON) olfactory neuron but not AWC (OFF).

The protein resides in the nucleus. Its function is as follows. Transcriptional regulator which binds DNA consensus sequence 5'-CCTTAAC-3'. Plays a role in establishing and maintaining asymmetric cell fates in chemosensory AWC neurons during larval neuronal development. This is achieved by repressing the expression of multiple AWC (OFF) genes, including srsx-3 and hlh-11 in the AWC (ON) neuron. Activates expression of sox-2 in the AWC (ON) neuron. The chain is Transcription factor nsy-7 from Caenorhabditis elegans.